Reading from the N-terminus, the 766-residue chain is MAKETFSIEFAGRTLTVETGQVAKQANGAVVVRYGDTTVLTAATMGKMATGDFFPLQVNYEEKMYAAGKFPGGFNKREARPSTDATLTARLIDRPIRPMFAEGFRNEVQVINTVLSYDENASGRVAAMFGSSLALAISDIPFDGPIAGVEVAYIDGKYIINPTVAEKEASSLELSVAGNINAINMVESGAKELSEEVMLGALLAGHNAVKELIEFQNEIVAKVGKEKAEVELLHVDEDLKAEVIAAYNSDLQKAVQVEEKLAREAATKAVKEAIISVYSAKYENDENLSIILRDLAEILEGMEHAEVRRLITEDKIRPDGRKIDEIRPLDAEIDFTPRSITHGTGLFTRGQTQALSTLTLAPMNEAQIIDGLNDEYKKRFMHHYNFPQYSVGETGRYGAPGRREIGHGALGERALEQVLPSLEEFPYAIRLVAEVLESNGSSSQASICAGTLALMAGGVPIKAPVAGIAMGLISDGTNYTVLTDIQGLEDHFGDMDFKVAGTREGITALQMDIKISGITPEILAEALAQAKTARFQILDVIEATIAQPREELAPSAPKIDTITIPVDKIKVVIGKGGEQIDKIIAETGVKIDIDDEGLCSIFSSDQSAIDRAKEIIAELVREAKVGEVYEAKVVRIESFGAFVNLFGKQDAMVHISEMAWARTAKVEDVMKLGDVVKVKIMKIDDKGRVDASMRALIEKPEGYVEPERKPRERRDNKDRRNGNGFDRRNNDRNNHNNNSGNHSFELRERKSHVDHEFPELSTKKPE.

Residues Asp490 and Asp496 each contribute to the Mg(2+) site. Residues 557–616 (PKIDTITIPVDKIKVVIGKGGEQIDKIIAETGVKIDIDDEGLCSIFSSDQSAIDRAKEII) form the KH domain. The region spanning 626–694 (GEVYEAKVVR…DKGRVDASMR (69 aa)) is the S1 motif domain. Basic and acidic residues-rich tracts occupy residues 700 to 734 (PEGY…DRNN) and 744 to 766 (FELR…KKPE). The segment at 700 to 766 (PEGYVEPERK…FPELSTKKPE (67 aa)) is disordered.

The protein belongs to the polyribonucleotide nucleotidyltransferase family. Mg(2+) is required as a cofactor.

It localises to the cytoplasm. The catalysed reaction is RNA(n+1) + phosphate = RNA(n) + a ribonucleoside 5'-diphosphate. Involved in mRNA degradation. Catalyzes the phosphorolysis of single-stranded polyribonucleotides processively in the 3'- to 5'-direction. The protein is Polyribonucleotide nucleotidyltransferase of Lactococcus lactis subsp. cremoris (strain MG1363).